Reading from the N-terminus, the 326-residue chain is MLSPIRTTFHNSVNIVQSSPCQTVSFAGKEYELKVIDEKTPILFQWFEPNPERYKKDEVPIVNTKQHPYLDNVTNAARIESDRMIGIFVDGDFSVNQKTAFSKLERDFENVMIIYREDVDFSMYDRKLSDIYHDIICEQRLRTEDKRDEYLLNLLEKELREISKAQDSLISMYAKKRNHAWFDFFRNLALLKAGEIFRCTYNTKNHGISFGEGCIYLDMDMILTGKLGTIYAPDGISMHVDRRNDSVNIENSAIIVNRSNHPALLEGLSFMHSKVDAHPYYDGLGKGVKKYFNFTPLHNYNHFCDFIEFNHPNIIMNTSQYTCSSW.

UDP-N-acetyl-alpha-D-glucosamine is bound by residues 45-47 (QWF), Y69, and 216-219 (YLDM). A DXD motif motif is present at residues 218-220 (DMD). A Mn(2+)-binding site is contributed by D220. E250 (proton acceptor) is an active-site residue. 2 residues coordinate Mn(2+): N317 and S319. UDP-N-acetyl-alpha-D-glucosamine contacts are provided by residues S319 and 324–326 (SSW).

The protein belongs to the glycosyltransferase NleB family. The cofactor is Mn(2+).

It is found in the secreted. Its subcellular location is the host cell. The enzyme catalyses L-arginyl-[protein] + UDP-N-acetyl-alpha-D-glucosamine = N(omega)-(N-acetyl-beta-D-glucosaminyl)-L-arginyl-[protein] + UDP + H(+). Protein-arginine N-acetylglucosaminyltransferase effector that catalyzes the transfer of a single N-acetylglucosamine (GlcNAc) to a conserved arginine residue of host target proteins. In contrast to NleB1, not able to disrupt TNF signaling in infected cells. Shows a lower enzymatic activity than NleB1. This chain is Protein-arginine N-acetylglucosaminyltransferase NleB2, found in Escherichia coli O127:H6 (strain E2348/69 / EPEC).